A 49-amino-acid polypeptide reads, in one-letter code: MKVLSSLKEAKNRHRDCQIVKRRGRIYVICKSNPRFKARQGGAKNRNKG.

Belongs to the bacterial ribosomal protein bL36 family.

The polypeptide is Large ribosomal subunit protein bL36 (Pseudomonas fluorescens (strain ATCC BAA-477 / NRRL B-23932 / Pf-5)).